A 156-amino-acid chain; its full sequence is Myosin, essential light chain, adductor muscle (156 aa).

EF-hand domains follow at residues 6-43 (DEID…LGIN) and 81-116 (GTFA…LGER).

Functionally, in molluscan muscle, calcium regulation is associated with myosin rather than with actin. Muscle myosin contains two types of light chains: the catalytic light chain, essential for ATPase activity, and the regulatory light chain, a calcium-binding protein responsible for Ca(2+) dependent binding and Ca(2+) dependent Mg-ATPase activity. This chain is Myosin, essential light chain, adductor muscle, found in Mizuhopecten yessoensis (Japanese scallop).